The primary structure comprises 128 residues: Small ribosomal subunit protein bS6 (128 aa).

Residues 100–128 form a disordered region; that stretch reads SPMAKAKEERFTRRDDERREEATEAASEE. The span at 104-121 shows a compositional bias: basic and acidic residues; the sequence is KAKEERFTRRDDERREEA.

Belongs to the bacterial ribosomal protein bS6 family.

In terms of biological role, binds together with bS18 to 16S ribosomal RNA. This Aeromonas hydrophila subsp. hydrophila (strain ATCC 7966 / DSM 30187 / BCRC 13018 / CCUG 14551 / JCM 1027 / KCTC 2358 / NCIMB 9240 / NCTC 8049) protein is Small ribosomal subunit protein bS6.